Here is a 683-residue protein sequence, read N- to C-terminus: Inositol-trisphosphate 3-kinase C (683 aa).

Residues Met-1–Leu-124 form a disordered region. Positions Ala-13–Ala-22 are enriched in low complexity. The segment covering Pro-44–Pro-58 has biased composition (gly residues). Basic and acidic residues predominate over residues Glu-105–Leu-124. Ser-127 and Ser-162 each carry phosphoserine. The tract at residues Thr-147–Pro-308 is disordered. Positions Trp-196–Thr-206 are enriched in polar residues. Basic and acidic residues predominate over residues Ser-249–Arg-259. Residues Phe-267 to Pro-289 are compositionally biased toward polar residues. Residues Glu-297–Pro-308 show a composition bias toward acidic residues. The short motif at Leu-324–Ile-332 is the Nuclear export signal element. Residues Pro-334–Lys-387 are disordered. The residue at position 336 (Thr-336) is a Phosphothreonine. Ser-404 is subject to Phosphoserine. Residues Lys-431, Glu-471–Leu-473, and Asp-484 each bind ATP. Substrate is bound by residues Lys-486, Arg-507–Lys-513, and Lys-534–Arg-541. The calmodulin-binding stretch occupies residues Asp-509–Val-517. Residues Lys-558 and Asp-638 each coordinate ATP. Residue Lys-641 participates in substrate binding.

The protein belongs to the inositol phosphokinase (IPK) family. As to expression, highly expressed in pancreas, skeletal muscle, liver, placenta and weakly in kidney and brain.

It localises to the nucleus. It is found in the cytoplasm. The enzyme catalyses 1D-myo-inositol 1,4,5-trisphosphate + ATP = 1D-myo-inositol 1,3,4,5-tetrakisphosphate + ADP + H(+). With respect to regulation, activated by calcium/calmodulin. Inhibited by high concentrations of the substrate Ins(1,2,4)P3, and allosterically activated by the product Ins(1,3,4,5)P4. In terms of biological role, catalyzes the phosphorylation of 1D-myo-inositol 1,4,5-trisphosphate (InsP3) into 1D-myo-inositol 1,3,4,5-tetrakisphosphate and participates to the regulation of calcium homeostasis. Can phosphorylate inositol 2,4,5-triphosphate to inositol 2,4,5,6-tetraphosphate. The protein is Inositol-trisphosphate 3-kinase C of Homo sapiens (Human).